The primary structure comprises 539 residues: Chaperonin GroEL (539 aa).

ATP is bound by residues 29–32 (TIGP), 86–90 (DGTTT), G413, 476–478 (NAA), and D492.

This sequence belongs to the chaperonin (HSP60) family. As to quaternary structure, forms a cylinder of 14 subunits composed of two heptameric rings stacked back-to-back. Interacts with the co-chaperonin GroES.

The protein resides in the cytoplasm. It carries out the reaction ATP + H2O + a folded polypeptide = ADP + phosphate + an unfolded polypeptide.. Its function is as follows. Together with its co-chaperonin GroES, plays an essential role in assisting protein folding. The GroEL-GroES system forms a nano-cage that allows encapsulation of the non-native substrate proteins and provides a physical environment optimized to promote and accelerate protein folding. In Staphylococcus haemolyticus (strain JCSC1435), this protein is Chaperonin GroEL.